The sequence spans 418 residues: MLSPTNSTSKKAPVPPQDSSKPVLISEEPQNQLLQKVARTALAVLLVVVTLGLILLFYSFSDLQSFPWCCQTRPSTKEQPTISIPVPLPSPPLAVPRPSTPPPPVISRPSTPPAPTPAISPPSTPSAPKPSTPPPLPPKAPKPVKTQEDLLPFVPEQVFVEMYEDMARRWIIEALVPAWDSDIIFKCLCYFHTLYQGLIPLETFPPATIFNFKQKIISILEDKKAVLRGEPIKGSLPICCSEENYRRHLHGTTLLPVFMWYHPTPKTLSDTMQTMKQLAIKGSVGASHWLLVIVDIQARRLVYFDSLYNYVMSPEDMEKDLQSFAQQLDQVYPAYDSQKFSVKIAAKEVIQKGSGSSCGAWCCQFLHWYLRDPFTDALNDLPVDSVERHENLASFVQACEAAVQDLPELFWPEAKALF.

Positions 1-10 (MLSPTNSTSK) are enriched in polar residues. Residues 1 to 23 (MLSPTNSTSKKAPVPPQDSSKPV) are disordered. The helical transmembrane segment at 40–60 (TALAVLLVVVTLGLILLFYSF) threads the bilayer. Residues 72-143 (TRPSTKEQPT…PPLPPKAPKP (72 aa)) are disordered. The segment covering 86 to 141 (VPLPSPPLAVPRPSTPPPPVISRPSTPPAPTPAISPPSTPSAPKPSTPPPLPPKAP) has biased composition (pro residues). Catalysis depends on residues His-288, Asp-305, and Cys-358.

It belongs to the peptidase C48 family.

The protein resides in the secreted. It is found in the host cell. It localises to the membrane. In terms of biological role, effector proteins function to alter host cell physiology and promote bacterial survival in host tissues. This protease possesses deubiquitinating and deneddylating activities. The chain is Deubiquitinase and deneddylase Dub1 (cdu1) from Chlamydia trachomatis serovar D (strain ATCC VR-885 / DSM 19411 / UW-3/Cx).